A 508-amino-acid polypeptide reads, in one-letter code: Rhamnogalacturonan I rhamnosyltransferase 1 (508 aa).

A helical; Signal-anchor for type II membrane protein transmembrane segment spans residues 41 to 63 (LWMIRAVTVLLLWSCFVHLMALG). 3 N-linked (GlcNAc...) asparagine glycosylation sites follow: Asn136, Asn202, and Asn223. 277–279 (HLR) serves as a coordination point for substrate. Asn391 is a glycosylation site (N-linked (GlcNAc...) asparagine).

This sequence belongs to the glycosyltransferase GT106 family. Highly expressed in siliques. Expressed in stems and flowers. Expressed at low levels in roots and rosette leaves.

Its subcellular location is the golgi apparatus membrane. The enzyme catalyses alpha-D-galacturonosyl-[(1-&gt;2)-alpha-L-rhamnosyl-(1-&gt;4)-alpha-D-galacturonosyl](n) + UDP-beta-L-rhamnose = [(1-&gt;2)-alpha-L-rhamnosyl-(1-&gt;4)-alpha-D-galacturonosyl](n+1) + UDP + H(+). Its pathway is glycan metabolism; pectin biosynthesis. Glycosyltransferase involved in the formation of rhamnogalacturonan I (RG-I) oligosaccharides in the seed coat mucilage, which is a specialized cell wall with abundant RG-I. Transfers the rhamnose residue from UDP-beta-L-rhamnose to RG-I oligosaccharides. Prefers RG-I oligosaccharides with a degree of polymerization of 5 or larger than 5. Does not act on oligosaccharides with a degree of polymerization of 4 or smaller than 4. Does not require metal ions for its activity. This is Rhamnogalacturonan I rhamnosyltransferase 1 from Arabidopsis thaliana (Mouse-ear cress).